Reading from the N-terminus, the 274-residue chain is Dermonecrotic toxin SdSicTox-betaIIB2ii (274 aa).

The active site involves His-5. Positions 25 and 27 each coordinate Mg(2+). The Nucleophile role is filled by His-41. 2 disulfide bridges follow: Cys-45/Cys-51 and Cys-47/Cys-190. A Mg(2+)-binding site is contributed by Asp-85.

This sequence belongs to the arthropod phospholipase D family. Class II subfamily. The cofactor is Mg(2+). Expressed by the venom gland.

Its subcellular location is the secreted. It carries out the reaction an N-(acyl)-sphingosylphosphocholine = an N-(acyl)-sphingosyl-1,3-cyclic phosphate + choline. The catalysed reaction is an N-(acyl)-sphingosylphosphoethanolamine = an N-(acyl)-sphingosyl-1,3-cyclic phosphate + ethanolamine. It catalyses the reaction a 1-acyl-sn-glycero-3-phosphocholine = a 1-acyl-sn-glycero-2,3-cyclic phosphate + choline. The enzyme catalyses a 1-acyl-sn-glycero-3-phosphoethanolamine = a 1-acyl-sn-glycero-2,3-cyclic phosphate + ethanolamine. In terms of biological role, dermonecrotic toxins cleave the phosphodiester linkage between the phosphate and headgroup of certain phospholipids (sphingolipid and lysolipid substrates), forming an alcohol (often choline) and a cyclic phosphate. This toxin acts on sphingomyelin (SM). It may also act on ceramide phosphoethanolamine (CPE), lysophosphatidylcholine (LPC) and lysophosphatidylethanolamine (LPE), but not on lysophosphatidylserine (LPS), and lysophosphatidylglycerol (LPG). It acts by transphosphatidylation, releasing exclusively cyclic phosphate products as second products. Induces dermonecrosis, hemolysis, increased vascular permeability, edema, inflammatory response, and platelet aggregation. In Sicarius cf. damarensis (strain GJB-2008) (Six-eyed sand spider), this protein is Dermonecrotic toxin SdSicTox-betaIIB2ii.